Reading from the N-terminus, the 146-residue chain is Ribosomal RNA large subunit methyltransferase H (146 aa).

S-adenosyl-L-methionine is bound by residues Leu60, Gly93, and 112–117 (MGKMTL).

Belongs to the RNA methyltransferase RlmH family. Homodimer.

It localises to the cytoplasm. It catalyses the reaction pseudouridine(1915) in 23S rRNA + S-adenosyl-L-methionine = N(3)-methylpseudouridine(1915) in 23S rRNA + S-adenosyl-L-homocysteine + H(+). Specifically methylates the pseudouridine at position 1915 (m3Psi1915) in 23S rRNA. This is Ribosomal RNA large subunit methyltransferase H from Koribacter versatilis (strain Ellin345).